Reading from the N-terminus, the 360-residue chain is Endolytic murein transglycosylase (360 aa).

Residues 16–36 (IILSSIVVLFLIIGGAFLYGK) traverse the membrane as a helical segment.

This sequence belongs to the transglycosylase MltG family.

The protein resides in the cell membrane. The catalysed reaction is a peptidoglycan chain = a peptidoglycan chain with N-acetyl-1,6-anhydromuramyl-[peptide] at the reducing end + a peptidoglycan chain with N-acetylglucosamine at the non-reducing end.. Functionally, functions as a peptidoglycan terminase that cleaves nascent peptidoglycan strands endolytically to terminate their elongation. The polypeptide is Endolytic murein transglycosylase (Bacillus subtilis (strain 168)).